The sequence spans 372 residues: NAD(P)H-quinone oxidoreductase subunit 1 (372 aa).

8 helical membrane-spanning segments follow: residues 27–47 (IIWLPIPMLLVLVAAVVGVLV), 97–117 (ILFTAGPILVLVPVILSWLIV), 128–148 (VGIGIFLWIALSSIQPIGLLM), 176–196 (LALSVLAIVLMTNSLSTIDIV), 204–224 (ILSWNIWRQPVGFIVFWICAL), 266–286 (ILSALLVSILYLGGWGFPIPV), 308–328 (SIGIVMTVLKAYLLVFIAILL), and 347–367 (FLLPISLANLLITAGLKLAFP).

The protein belongs to the complex I subunit 1 family. NDH-1 is composed of at least 11 different subunits.

The protein resides in the cellular thylakoid membrane. The enzyme catalyses a plastoquinone + NADH + (n+1) H(+)(in) = a plastoquinol + NAD(+) + n H(+)(out). It carries out the reaction a plastoquinone + NADPH + (n+1) H(+)(in) = a plastoquinol + NADP(+) + n H(+)(out). NDH-1 shuttles electrons from an unknown electron donor, via FMN and iron-sulfur (Fe-S) centers, to quinones in the respiratory and/or the photosynthetic chain. The immediate electron acceptor for the enzyme in this species is believed to be plastoquinone. Couples the redox reaction to proton translocation, and thus conserves the redox energy in a proton gradient. The sequence is that of NAD(P)H-quinone oxidoreductase subunit 1 from Prochlorococcus marinus (strain MIT 9312).